The chain runs to 336 residues: Transcription initiation factor IIB (336 aa).

The TFIIB-type zinc-finger motif lies at 41–72 (QKLRCPICGNTVFIEDAERGQIVCASCGYVLM). Cys45, Cys48, Cys64, and Cys67 together coordinate Zn(2+). 2 consecutive repeat copies span residues 152-235 (HELN…AREL) and 246-327 (QYVP…ELAK).

This sequence belongs to the TFIIB family.

In terms of biological role, stabilizes TBP binding to an archaeal box-A promoter. Also responsible for recruiting RNA polymerase II to the pre-initiation complex (DNA-TBP-TFIIB). The protein is Transcription initiation factor IIB of Caldivirga maquilingensis (strain ATCC 700844 / DSM 13496 / JCM 10307 / IC-167).